Reading from the N-terminus, the 855-residue chain is DNA mismatch repair protein MutS (855 aa).

613-620 is a binding site for ATP; it reads GPNMGGKS. Positions 796–816 are disordered; that stretch reads TTSLPHEMPSQQSGKPASPMQ.

It belongs to the DNA mismatch repair MutS family.

This protein is involved in the repair of mismatches in DNA. It is possible that it carries out the mismatch recognition step. This protein has a weak ATPase activity. In Pseudomonas aeruginosa (strain ATCC 15692 / DSM 22644 / CIP 104116 / JCM 14847 / LMG 12228 / 1C / PRS 101 / PAO1), this protein is DNA mismatch repair protein MutS.